The primary structure comprises 122 residues: Small ribosomal subunit protein uS13 (122 aa).

The interval 95 to 122 is disordered; the sequence is NLPVRGQRTHTNARTRKGKAKPIAGKKK.

This sequence belongs to the universal ribosomal protein uS13 family. Part of the 30S ribosomal subunit. Forms a loose heterodimer with protein S19. Forms two bridges to the 50S subunit in the 70S ribosome.

Its function is as follows. Located at the top of the head of the 30S subunit, it contacts several helices of the 16S rRNA. In the 70S ribosome it contacts the 23S rRNA (bridge B1a) and protein L5 of the 50S subunit (bridge B1b), connecting the 2 subunits; these bridges are implicated in subunit movement. Contacts the tRNAs in the A and P-sites. This is Small ribosomal subunit protein uS13 from Methylobacterium nodulans (strain LMG 21967 / CNCM I-2342 / ORS 2060).